The chain runs to 756 residues: 1,4-alpha-glucan branching enzyme GlgB (756 aa).

Aspartate 425 functions as the Nucleophile in the catalytic mechanism. Glutamate 478 functions as the Proton donor in the catalytic mechanism.

The protein belongs to the glycosyl hydrolase 13 family. GlgB subfamily. As to quaternary structure, monomer.

It carries out the reaction Transfers a segment of a (1-&gt;4)-alpha-D-glucan chain to a primary hydroxy group in a similar glucan chain.. The protein operates within glycan biosynthesis; glycogen biosynthesis. In terms of biological role, catalyzes the formation of the alpha-1,6-glucosidic linkages in glycogen by scission of a 1,4-alpha-linked oligosaccharide from growing alpha-1,4-glucan chains and the subsequent attachment of the oligosaccharide to the alpha-1,6 position. This Cupriavidus necator (strain ATCC 17699 / DSM 428 / KCTC 22496 / NCIMB 10442 / H16 / Stanier 337) (Ralstonia eutropha) protein is 1,4-alpha-glucan branching enzyme GlgB.